A 485-amino-acid chain; its full sequence is Glutamyl-tRNA(Gln) amidotransferase subunit A (485 aa).

Catalysis depends on charge relay system residues lysine 75 and serine 150. Serine 174 serves as the catalytic Acyl-ester intermediate.

It belongs to the amidase family. GatA subfamily. As to quaternary structure, heterotrimer of A, B and C subunits.

The enzyme catalyses L-glutamyl-tRNA(Gln) + L-glutamine + ATP + H2O = L-glutaminyl-tRNA(Gln) + L-glutamate + ADP + phosphate + H(+). Its function is as follows. Allows the formation of correctly charged Gln-tRNA(Gln) through the transamidation of misacylated Glu-tRNA(Gln) in organisms which lack glutaminyl-tRNA synthetase. The reaction takes place in the presence of glutamine and ATP through an activated gamma-phospho-Glu-tRNA(Gln). This chain is Glutamyl-tRNA(Gln) amidotransferase subunit A, found in Trichodesmium erythraeum (strain IMS101).